A 245-amino-acid polypeptide reads, in one-letter code: MSQSTFVLRRNGFTFKQFFVAHDRCAMKVGTDGILLGAWAPVAGVKRCLDIGAGSGLLALMLAQRTDDSVMIDAVELESEAAAQAQENINQSPWAERINVHTADIQQWITQQTVRFDLIISNPPYYQQGVECSTPQREQARYTTTLDHPSLLTCAAECITEEGFFCVVLPEQIGNGFTELALSMGWHLRLRTDVAENEARLPHRVLLAFSPQAGECFSDRLVIRGPDQNYSEAYTALTQAFYLFM.

The protein belongs to the methyltransferase superfamily. tRNA (adenine-N(6)-)-methyltransferase family.

It localises to the cytoplasm. The enzyme catalyses adenosine(37) in tRNA1(Val) + S-adenosyl-L-methionine = N(6)-methyladenosine(37) in tRNA1(Val) + S-adenosyl-L-homocysteine + H(+). In terms of biological role, specifically methylates the adenine in position 37 of tRNA(1)(Val) (anticodon cmo5UAC). This is tRNA1(Val) (adenine(37)-N6)-methyltransferase from Escherichia coli O7:K1 (strain IAI39 / ExPEC).